A 405-amino-acid chain; its full sequence is Serine/threonine-protein kinase SSN3 (405 aa).

One can recognise a Protein kinase domain in the interval 40–350 (YEIIGYIAAG…ANDALLHPYF (311 aa)). ATP is bound by residues 46–54 (IAAGTYGRV) and lysine 71. Aspartate 173 serves as the catalytic Proton acceptor. The tract at residues 377-405 (DSDIKTMTYQGTKRGSQGGDNLHPRKKQK) is disordered. Positions 381–391 (KTMTYQGTKRG) are enriched in polar residues.

Belongs to the protein kinase superfamily. CMGC Ser/Thr protein kinase family. CDC2/CDKX subfamily. As to quaternary structure, component of the srb8-11 complex, a regulatory module of the Mediator complex. Requires Mg(2+) as cofactor.

Its subcellular location is the nucleus. It catalyses the reaction L-seryl-[protein] + ATP = O-phospho-L-seryl-[protein] + ADP + H(+). The catalysed reaction is L-threonyl-[protein] + ATP = O-phospho-L-threonyl-[protein] + ADP + H(+). It carries out the reaction [DNA-directed RNA polymerase] + ATP = phospho-[DNA-directed RNA polymerase] + ADP + H(+). Its function is as follows. Component of the srb8-11 complex. The srb8-11 complex is a regulatory module of the Mediator complex which is itself dependent transcription. The srb8-11 complex may be involved in the transcriptional repression of a subset of genes regulated by Mediator. It may inhibit the association of the Mediator complex with RNA polymerase II to form the holoenzyme complex. The srb8-11 complex phosphorylates the C-terminal domain (CTD) of the largest subunit of RNA polymerase II. This chain is Serine/threonine-protein kinase SSN3 (SSN3), found in Yarrowia lipolytica (strain CLIB 122 / E 150) (Yeast).